The sequence spans 158 residues: Small ribosomal subunit protein uS19 (158 aa).

Belongs to the universal ribosomal protein uS19 family.

Its function is as follows. Protein S19 forms a complex with S13 that binds strongly to the 16S ribosomal RNA. The sequence is that of Small ribosomal subunit protein uS19 from Pyrobaculum aerophilum (strain ATCC 51768 / DSM 7523 / JCM 9630 / CIP 104966 / NBRC 100827 / IM2).